A 252-amino-acid polypeptide reads, in one-letter code: 2-succinyl-6-hydroxy-2,4-cyclohexadiene-1-carboxylate synthase (252 aa).

Belongs to the AB hydrolase superfamily. MenH family. Monomer.

It catalyses the reaction 5-enolpyruvoyl-6-hydroxy-2-succinyl-cyclohex-3-ene-1-carboxylate = (1R,6R)-6-hydroxy-2-succinyl-cyclohexa-2,4-diene-1-carboxylate + pyruvate. Its pathway is quinol/quinone metabolism; 1,4-dihydroxy-2-naphthoate biosynthesis; 1,4-dihydroxy-2-naphthoate from chorismate: step 3/7. It participates in quinol/quinone metabolism; menaquinone biosynthesis. Catalyzes a proton abstraction reaction that results in 2,5-elimination of pyruvate from 2-succinyl-5-enolpyruvyl-6-hydroxy-3-cyclohexene-1-carboxylate (SEPHCHC) and the formation of 2-succinyl-6-hydroxy-2,4-cyclohexadiene-1-carboxylate (SHCHC). This is 2-succinyl-6-hydroxy-2,4-cyclohexadiene-1-carboxylate synthase from Escherichia fergusonii (strain ATCC 35469 / DSM 13698 / CCUG 18766 / IAM 14443 / JCM 21226 / LMG 7866 / NBRC 102419 / NCTC 12128 / CDC 0568-73).